We begin with the raw amino-acid sequence, 261 residues long: Carnitinyl-CoA dehydratase (261 aa).

The active-site Nucleophile is the glutamate 111. Glutamate 131 acts as the Proton acceptor in catalysis.

The protein belongs to the enoyl-CoA hydratase/isomerase family.

It carries out the reaction (R)-carnitinyl-CoA = crotonobetainyl-CoA + H2O. It participates in amine and polyamine metabolism; carnitine metabolism. Functionally, catalyzes the reversible dehydration of L-carnitinyl-CoA to crotonobetainyl-CoA. The chain is Carnitinyl-CoA dehydratase from Salmonella dublin (strain CT_02021853).